A 302-amino-acid polypeptide reads, in one-letter code: N-acetylmuramic acid 6-phosphate etherase (302 aa).

Residues 58–221 enclose the SIS domain; it reads IGEAFLNGGR…STGAMVKTGK (164 aa). Residue glutamate 86 is the Proton donor of the active site. Residue glutamate 117 is part of the active site.

The protein belongs to the GCKR-like family. MurNAc-6-P etherase subfamily. Homodimer.

The enzyme catalyses N-acetyl-D-muramate 6-phosphate + H2O = N-acetyl-D-glucosamine 6-phosphate + (R)-lactate. The protein operates within amino-sugar metabolism; N-acetylmuramate degradation. Its function is as follows. Specifically catalyzes the cleavage of the D-lactyl ether substituent of MurNAc 6-phosphate, producing GlcNAc 6-phosphate and D-lactate. This chain is N-acetylmuramic acid 6-phosphate etherase, found in Clostridium botulinum (strain Hall / ATCC 3502 / NCTC 13319 / Type A).